A 144-amino-acid polypeptide reads, in one-letter code: Oleosin H2 (144 aa).

An N-acetylalanine modification is found at alanine 2. 3 consecutive transmembrane segments (helical) span residues 28–48, 53–73, and 75–95; these read VLAVVTLFPLGAVLLCLAGLI, IIGLAVATPLFVIFSPILVPA, and LTIALAVTGFLTSGAFGITAL. Residues 61–72 carry the Proline-knot motif; sequence PLFVIFSPILVP. The disordered stretch occupies residues 124-144; that stretch reads QETVGQKTREAGQRSQDVIRP.

The protein belongs to the oleosin family. In terms of tissue distribution, expressed in seeds (at protein level).

It localises to the lipid droplet. The protein resides in the membrane. Its function is as follows. May have a structural role to stabilize the lipid body during desiccation of the seed by preventing coalescence of the oil. Probably interacts with both lipid and phospholipid moieties of lipid bodies. May also provide recognition signals for specific lipase anchorage in lipolysis during seedling growth. The chain is Oleosin H2 from Sesamum indicum (Oriental sesame).